We begin with the raw amino-acid sequence, 117 residues long: Ubiquitin-like protein 3 (117 aa).

The Ubiquitin-like domain maps to 10 to 88 (INLRLILVSG…PFGKTTVMHL (79 aa)). Residue Cys-113 is the site of S-palmitoyl cysteine attachment. Cys-114 is subject to Cysteine methyl ester. Cys-114 is lipidated: S-geranylgeranyl cysteine. Residues 115–117 (VIL) constitute a propeptide, removed in mature form.

The protein localises to the cell membrane. This is Ubiquitin-like protein 3 (Ubl3) from Mus musculus (Mouse).